The chain runs to 169 residues: Methane monooxygenase component A gamma chain (169 aa).

M.trichosporium has two forms of methane monooxygenase, a soluble and a membrane-bound type. The soluble type consists of four components (A to D): protein A, comprising three chains, in an alpha-2, beta-2, gamma-2 configuration, is a nonheme iron protein containing an unusual mu-hydroxo bridge structure at its active site and interacts with both oxygen and methane.

The enzyme catalyses methane + NADH + O2 + H(+) = methanol + NAD(+) + H2O. The catalysed reaction is methane + NADPH + O2 + H(+) = methanol + NADP(+) + H2O. In terms of biological role, responsible for the initial oxygenation of methane to methanol in methanotrophs. It also catalyzes the monohydroxylation of a variety of unactivated alkenes, alicyclic, aromatic and heterocyclic compounds. This is Methane monooxygenase component A gamma chain (mmoZ) from Methylosinus trichosporium.